The sequence spans 59 residues: Large ribosomal subunit protein uL30 (59 aa).

The protein belongs to the universal ribosomal protein uL30 family. Part of the 50S ribosomal subunit.

The chain is Large ribosomal subunit protein uL30 from Leptospira interrogans serogroup Icterohaemorrhagiae serovar copenhageni (strain Fiocruz L1-130).